We begin with the raw amino-acid sequence, 361 residues long: Phosphoribosylformylglycinamidine cyclo-ligase (361 aa).

This sequence belongs to the AIR synthase family.

It is found in the cytoplasm. It carries out the reaction 2-formamido-N(1)-(5-O-phospho-beta-D-ribosyl)acetamidine + ATP = 5-amino-1-(5-phospho-beta-D-ribosyl)imidazole + ADP + phosphate + H(+). Its pathway is purine metabolism; IMP biosynthesis via de novo pathway; 5-amino-1-(5-phospho-D-ribosyl)imidazole from N(2)-formyl-N(1)-(5-phospho-D-ribosyl)glycinamide: step 2/2. The sequence is that of Phosphoribosylformylglycinamidine cyclo-ligase from Bartonella quintana (strain Toulouse) (Rochalimaea quintana).